A 76-amino-acid polypeptide reads, in one-letter code: Acyl carrier protein (76 aa).

The Carrier domain occupies 1–75; sequence MVLEKIKTLM…DVVLYIEKNL (75 aa). Ser-35 carries the post-translational modification O-(pantetheine 4'-phosphoryl)serine.

This sequence belongs to the acyl carrier protein (ACP) family. In terms of processing, 4'-phosphopantetheine is transferred from CoA to a specific serine of apo-ACP by AcpS. This modification is essential for activity because fatty acids are bound in thioester linkage to the sulfhydryl of the prosthetic group.

It localises to the cytoplasm. Its pathway is lipid metabolism; fatty acid biosynthesis. Its function is as follows. Carrier of the growing fatty acid chain in fatty acid biosynthesis. The protein is Acyl carrier protein of Phytoplasma australiense.